The primary structure comprises 163 residues: Photosystem II extrinsic protein V (163 aa).

Positions M1–A26 are cleaved as a signal peptide. Heme c contacts are provided by C63, C66, H67, and M130.

This sequence belongs to the cytochrome c family. PsbV subfamily. In terms of assembly, PSII is composed of 1 copy each of membrane proteins PsbA, PsbB, PsbC, PsbD, PsbE, PsbF, PsbH, PsbI, PsbJ, PsbK, PsbL, PsbM, PsbT, PsbY, PsbZ, Psb30/Ycf12, at least 3 peripheral proteins of the oxygen-evolving complex and a large number of cofactors. It forms dimeric complexes. Heme c serves as cofactor.

It is found in the plastid. Its subcellular location is the chloroplast thylakoid membrane. Its function is as follows. One of the extrinsic, lumenal subunits of photosystem II (PSII). PSII is a light-driven water plastoquinone oxidoreductase, using light energy to abstract electrons from H(2)O, generating a proton gradient subsequently used for ATP formation. The extrinsic proteins stabilize the structure of photosystem II oxygen-evolving complex (OEC), the ion environment of oxygen evolution and protect the OEC against heat-induced inactivation. The chain is Photosystem II extrinsic protein V from Thalassiosira pseudonana (Marine diatom).